Consider the following 209-residue polypeptide: Uracil phosphoribosyltransferase (209 aa).

Residues R79, R104, and 131-139 (DPMLATGGS) contribute to the 5-phospho-alpha-D-ribose 1-diphosphate site. Uracil-binding positions include I194 and 199-201 (GDA). D200 lines the 5-phospho-alpha-D-ribose 1-diphosphate pocket.

The protein belongs to the UPRTase family. It depends on Mg(2+) as a cofactor.

It carries out the reaction UMP + diphosphate = 5-phospho-alpha-D-ribose 1-diphosphate + uracil. Its pathway is pyrimidine metabolism; UMP biosynthesis via salvage pathway; UMP from uracil: step 1/1. With respect to regulation, allosterically activated by GTP. Its function is as follows. Catalyzes the conversion of uracil and 5-phospho-alpha-D-ribose 1-diphosphate (PRPP) to UMP and diphosphate. This Lacticaseibacillus paracasei (strain ATCC 334 / BCRC 17002 / CCUG 31169 / CIP 107868 / KCTC 3260 / NRRL B-441) (Lactobacillus paracasei) protein is Uracil phosphoribosyltransferase.